We begin with the raw amino-acid sequence, 410 residues long: Polyadenylation and cleavage factor homolog 5 (410 aa).

Positions 1–17 (MASNGSFSAQRNANAGT) are enriched in polar residues. The disordered stretch occupies residues 1 to 32 (MASNGSFSAQRNANAGTTMKRRNDNRGYGGGI). The stretch at 191–214 (SKELTDLLSLLNNEKEKKTSEASN) forms a coiled coil. The C2H2-type zinc-finger motif lies at 247-269 (RQCTSCGVRFKCQEEHSKHMDWH).

As to quaternary structure, forms a complex with cleavage and polyadenylation specificity factor (CPSF) subunits CSTF77, CLPS3, PCFS4 and PCFS1.

The protein localises to the nucleus. The sequence is that of Polyadenylation and cleavage factor homolog 5 from Arabidopsis thaliana (Mouse-ear cress).